We begin with the raw amino-acid sequence, 308 residues long: ADP-L-glycero-D-manno-heptose-6-epimerase (308 aa).

Residues 10-11 (FI), 31-32 (DN), Lys38, Lys53, 75-79 (EGACS), and Asn92 each bind NADP(+). Tyr139 functions as the Proton acceptor in the catalytic mechanism. Lys143 provides a ligand contact to NADP(+). A substrate-binding site is contributed by Asn168. 2 residues coordinate NADP(+): Val169 and Lys177. Lys177 serves as the catalytic Proton acceptor. Residues Ser179, His186, 200–203 (FAGS), Arg208, and Tyr271 each bind substrate.

Belongs to the NAD(P)-dependent epimerase/dehydratase family. HldD subfamily. In terms of assembly, homopentamer. NADP(+) is required as a cofactor.

The catalysed reaction is ADP-D-glycero-beta-D-manno-heptose = ADP-L-glycero-beta-D-manno-heptose. Its pathway is nucleotide-sugar biosynthesis; ADP-L-glycero-beta-D-manno-heptose biosynthesis; ADP-L-glycero-beta-D-manno-heptose from D-glycero-beta-D-manno-heptose 7-phosphate: step 4/4. It participates in bacterial outer membrane biogenesis; LOS core biosynthesis. In terms of biological role, catalyzes the interconversion between ADP-D-glycero-beta-D-manno-heptose and ADP-L-glycero-beta-D-manno-heptose via an epimerization at carbon 6 of the heptose. This Haemophilus influenzae (strain ATCC 51907 / DSM 11121 / KW20 / Rd) protein is ADP-L-glycero-D-manno-heptose-6-epimerase.